The chain runs to 156 residues: Endogenous retrovirus group K member 9 Pro protein (156 aa).

Residues 21–96 (FEGLVDTGAD…IPLNLWGRDL (76 aa)) form the Peptidase A2 domain. D26 is a catalytic residue. The 46-residue stretch at 111–156 (YSPTSQKIMTKRGYIPGKGLGKNEDGIKIPFEAKINQKREGIGYPF) folds into the G-patch domain.

It belongs to the peptidase A2 family. HERV class-II K(HML-2) subfamily. As to quaternary structure, active as a homodimer. Post-translationally, autoproteolytically processed at the N-terminus. Expected C-terminal autoprocessing not detected. The sequence shown is that of the processed Pro protein.

The enzyme catalyses Processing at the authentic HIV-1 PR recognition site and release of the mature p17 matrix and the p24 capsid protein, as a result of the cleavage of the -SQNY-|-PIVQ- cleavage site.. Retroviral proteases have roles in the processing of the primary translation products and the maturation of the viral particle. Endogenous Pro proteins may have kept, lost or modified their original function during evolution. This Homo sapiens (Human) protein is Endogenous retrovirus group K member 9 Pro protein (ERVK-9).